We begin with the raw amino-acid sequence, 319 residues long: tRNA uridine(34) hydroxylase (319 aa).

In terms of domain architecture, Rhodanese spans 125 to 219 (LDENTVVIDA…YGKDPEVQGD (95 aa)). The active-site Cysteine persulfide intermediate is the Cys179.

This sequence belongs to the TrhO family.

The catalysed reaction is uridine(34) in tRNA + AH2 + O2 = 5-hydroxyuridine(34) in tRNA + A + H2O. In terms of biological role, catalyzes oxygen-dependent 5-hydroxyuridine (ho5U) modification at position 34 in tRNAs. This chain is tRNA uridine(34) hydroxylase, found in Lactococcus lactis subsp. lactis (strain IL1403) (Streptococcus lactis).